Reading from the N-terminus, the 206-residue chain is Large ribosomal subunit protein uL4 (206 aa).

The span at 43–52 (NKRQGTQSAK) shows a compositional bias: polar residues. Positions 43–86 (NKRQGTQSAKTRAEVSGGGRKPWRQKGTGHARQGSTRSPQWKGG) are disordered.

Belongs to the universal ribosomal protein uL4 family. In terms of assembly, part of the 50S ribosomal subunit.

In terms of biological role, one of the primary rRNA binding proteins, this protein initially binds near the 5'-end of the 23S rRNA. It is important during the early stages of 50S assembly. It makes multiple contacts with different domains of the 23S rRNA in the assembled 50S subunit and ribosome. Forms part of the polypeptide exit tunnel. This chain is Large ribosomal subunit protein uL4, found in Lachnoclostridium phytofermentans (strain ATCC 700394 / DSM 18823 / ISDg) (Clostridium phytofermentans).